The sequence spans 2019 residues: Sodium channel protein type 5 subunit alpha (2019 aa).

Residues 1-129 (MANFLLPRGT…VRRAAVKILV (129 aa)) lie on the Cytoplasmic side of the membrane. The segment at 27 to 66 (RMAEKQARGSATSQESREGLPEEEAPRPQLDLQASKKLPD) is disordered. Ser36 is subject to Phosphoserine. Thr38 is subject to Phosphothreonine. Positions 41 to 52 (ESREGLPEEEAP) are enriched in basic and acidic residues. One copy of the I repeat lies at 113-420 (VLSPFHPVRR…VVAMAYEEQN (308 aa)). The helical transmembrane segment at 130 to 149 (HSLFSMLIMCTILTNCVFMA) threads the bilayer. Topologically, residues 150–157 (QHDPPPWT) are extracellular. Residues 158 to 179 (KYVEYTFTAIYTFESLVKILAR) form a helical membrane-spanning segment. Residues 180 to 188 (GFCLHAFTF) are Cytoplasmic-facing. Residues 189-209 (LRDPWNWLDFSVIVMAYTTEF) form a helical membrane-spanning segment. Over 210–216 (VDLGNVS) the chain is Extracellular. N-linked (GlcNAc...) asparagine glycosylation is present at Asn214. The chain crosses the membrane as a helical span at residues 217–236 (ALRTFRVLRALKTISVISGL). Residues 237–249 (KTIVGALIQSVKK) lie on the Cytoplasmic side of the membrane. Residues 250-272 (LADVMVLTVFCLSVFALIGLQLF) traverse the membrane as a helical segment. At 273-357 (MGNLRHKCVR…PDHGYTSFDS (85 aa)) the chain is on the extracellular side. A disulfide bridge connects residues Cys280 and Cys335. Asn283, Asn288, Asn291, Asn318, and Asn328 each carry an N-linked (GlcNAc...) asparagine glycan. The segment at residues 358 to 378 (FAWAFLALFRLMTQDCWERLY) is an intramembrane region (pore-forming). The Extracellular segment spans residues 379–386 (QQTLRSAG). Residues 387 to 413 (KIYMIFFMLVIFLGSFYLVNLILAVVA) form a helical membrane-spanning segment. At 414–719 (MAYEEQNQAT…VKFVVMDPFA (306 aa)) the chain is on the cytoplasmic side. A phosphoserine mark is found at Ser457, Ser460, Ser483, and Ser484. Disordered stretches follow at residues 461–575 (LEMS…TQGQ) and 610–647 (EATS…TPQA). Thr486 is modified (phosphothreonine). Positions 491-503 (DDRLPKSDSEDGP) are enriched in basic and acidic residues. 2 positions are modified to phosphoserine: Ser497 and Ser510. Residues 507 to 528 (NQLSLTHGLSRTSMRPRSSRGS) show a composition bias toward polar residues. Arg526 bears the Dimethylated arginine; alternate mark. Arg526 is modified (omega-N-methylarginine; alternate). A phosphoserine mark is found at Ser539 and Ser571. Phosphoserine occurs at positions 664 and 667. An II repeat occupies 699–971 (CCPLWMSIKQ…QLALARIQRG (273 aa)). Residues 720–737 (DLTITMCIVLNTLFMALE) form a helical membrane-spanning segment. Residues 738-746 (HYNMTAEFE) are Extracellular-facing. N-linked (GlcNAc...) asparagine glycosylation is present at Asn740. A helical transmembrane segment spans residues 747–769 (EMLQVGNLVFTGIFTAEMTFKII). Residues 770 to 775 (ALDPYY) are Cytoplasmic-facing. Residues 776–796 (YFQQGWNIFDSIIVILSLMEL) traverse the membrane as a helical segment. Residues 797–806 (GLSRMGNLSV) lie on the Extracellular side of the membrane. N-linked (GlcNAc...) asparagine glycosylation is present at Asn803. A helical transmembrane segment spans residues 807 to 821 (LRSFRLLRVFKLAKS). Residues 822–838 (WPTLNTLIKIIGNSVGA) lie on the Cytoplasmic side of the membrane. A helical membrane pass occupies residues 839 to 860 (LGNLTLVLAIIVFIFAVVGMQL). Residues 861–886 (FGKNYSELRHRISDSGLLPRWHMMDF) lie on the Extracellular side of the membrane. Asn864 is a glycosylation site (N-linked (GlcNAc...) asparagine). An intramembrane region (pore-forming) is located at residues 887 to 905 (FHAFLIIFRILCGEWIETM). Over 906–914 (WDCMEVSGQ) the chain is Extracellular. A disulfide bridge links Cys908 with Cys917. The helical transmembrane segment at 915–943 (SLCLLVFLLVMVIGNLVVLNLFLALLLSS) threads the bilayer. Over 944–1205 (FSADNLTAPD…LRKTCYRIVE (262 aa)) the chain is Cytoplasmic. A disordered region spans residues 1000–1144 (HSQLPSCIAA…EDSYSEGSTA (145 aa)). Over residues 1017–1036 (EVEKAPPARKETRFEEDKRP) the composition is skewed to basic and acidic residues. The segment covering 1056–1075 (SDTDDQEEDEENSLGTEEEE) has biased composition (acidic residues). Over residues 1098 to 1115 (SQVSETTSSEAEASTSQA) the composition is skewed to low complexity. The III repeat unit spans residues 1189–1503 (PGKVWWRLRK…KKYYNAMKKL (315 aa)). A helical membrane pass occupies residues 1206 to 1227 (HSWFETFIIFMILLSSGALAFE). Topologically, residues 1228–1238 (DIYLEERKTIK) are extracellular. The helical transmembrane segment at 1239–1261 (VLLEYADKMFTYVFVLEMLLKWV) threads the bilayer. Residues 1262–1270 (AYGFKKYFT) are Cytoplasmic-facing. Residues 1271–1293 (NAWCWLDFLIVDVSLVSLVANTL) traverse the membrane as a helical segment. Residues 1294–1299 (GFAEMG) lie on the Extracellular side of the membrane. A helical membrane pass occupies residues 1300–1319 (PIKSLRTLRALRPLRALSRF). Residues 1320–1332 (EGMRVVVNALVGA) are Cytoplasmic-facing. A helical transmembrane segment spans residues 1333-1357 (IPSIMNVLLVCLIFWLIFSIMGVNL). The Extracellular portion of the chain corresponds to 1358–1402 (FAGKFGRCINQTEGDLPLNYTIVNNKSECESFNVTGELYWTKVKV). Asn1367, Asn1376, Asn1382, and Asn1390 each carry an N-linked (GlcNAc...) asparagine glycan. An intramembrane region (pore-forming) is located at residues 1403–1424 (NFDNVGAGYLALLQVATFKGWM). At 1425–1447 (DIMYAAVDSRGYEEQPQWEDNLY) the chain is on the extracellular side. A helical membrane pass occupies residues 1448–1472 (MYIYFVVFIIFGSFFTLNLFIGVII). Topologically, residues 1473 to 1530 (DNFNQQKKKLGGQDIFMTEEQKKYYNAMKKLGSKKPQKPIPRPLNKYQGFIFDIVTKQ) are cytoplasmic. At Ser1505 the chain carries Phosphoserine; by PKC. An IV repeat occupies 1512–1809 (IPRPLNKYQG…WEKFDPEATQ (298 aa)). The chain crosses the membrane as a helical span at residues 1531 to 1549 (AFDVTIMFLICLNMVTMMV). The Extracellular portion of the chain corresponds to 1550–1560 (ETDDQSPEKVN). The helical transmembrane segment at 1561 to 1582 (ILAKINLLFVAIFTGECIVKMA) threads the bilayer. The Cytoplasmic segment spans residues 1583–1591 (ALRHYYFTN). The chain crosses the membrane as a helical span at residues 1592-1614 (SWNIFDFVVVILSIVGTVLSDII). Residues 1615–1621 (QKYFFSP) are Extracellular-facing. The helical transmembrane segment at 1622-1642 (TLFRVIRLARIGRILRLIRGA) threads the bilayer. Topologically, residues 1643-1652 (KGIRTLLFAL) are cytoplasmic. Residues 1653–1681 (MMSLPALFNIGLLLFLVMFIYSIFGMANF) traverse the membrane as a helical segment. Topologically, residues 1682–1699 (AYVKWEAGIDDMFNFQTF) are extracellular. The segment at residues 1700–1716 (ANSMLCLFQITTSAGWD) is an intramembrane region (pore-forming). Residues 1717-1747 (GLLSPILNTGPPYCDPNLPNSNGSRGNCGSP) are Extracellular-facing. The helical transmembrane segment at 1748–1773 (AVGILFFTTYIIISFLIVVNMYIAII) threads the bilayer. Over 1774–2019 (LENFSVATEE…SPDRDRESIV (246 aa)) the chain is Cytoplasmic. Residues 1841 to 1903 (DLPMVSGDRI…ITTTLRRKHE (63 aa)) form an interaction with FGF13 region. One can recognise an IQ domain in the interval 1903–1932 (EEVSATVIQRAFRRHLLQRSVKHASFLFRQ). A compositionally biased stretch (low complexity) spans 1963–1982 (SGPLSSSSISSTSFPPSYDS). The tract at residues 1963–2019 (SGPLSSSSISSTSFPPSYDSVTRATSDNLPVRASDYSRSEDLADFPPSPDRDRESIV) is disordered. The interaction with NEDD4, NEDD4L and WWP2 stretch occupies residues 1977–1980 (PPSY).

It belongs to the sodium channel (TC 1.A.1.10) family. Nav1.5/SCN5A subfamily. In terms of assembly, cannot form the same regulatory interactions with beta subunits as other Navs do. Interacts with the PDZ domain of the syntrophin SNTA1, SNTB1 and SNTB2. Interacts with NEDD4, NEDD4L, WWP2 and GPD1L. Interacts with CALM. Interacts with FGF13; the interaction is direct and may regulate SNC5A density at membranes and function. Interacts with FGF12 and FGF14. Interacts with ANK3. Interacts with PKP2 (via N-terminus). Interacts with TMEM233. Interacts with XIRP2; the interaction is required for normal action potential configuration in the heart. Phosphorylation at Ser-1505 by PKC in a highly conserved cytoplasmic loop slows inactivation of the sodium channel and reduces peak sodium currents. Regulated through phosphorylation by CaMK2D. In terms of processing, ubiquitinated by NEDD4L; which promotes its endocytosis. Does not seem to be ubiquitinated by NEDD4 or WWP2. Post-translationally, lacks the cysteine which covalently binds the conotoxin GVIIJ. This cysteine (position 868) is speculated in other sodium channel subunits alpha to be implied in covalent binding with the sodium channel subunit beta-2 or beta-4. N-glycosylated at Asn-318, probably hinders potential interaction with regulatory subunits. In terms of tissue distribution, expressed in the myocardium (at protein level).

It localises to the cell membrane. The protein localises to the cytoplasm. Its subcellular location is the perinuclear region. The protein resides in the sarcolemma. It is found in the T-tubule. It localises to the cell junction. The enzyme catalyses Na(+)(in) = Na(+)(out). With respect to regulation, channel inactivation is regulated by intracellular calcium levels. It is a tetrodotoxin-resistant voltage-gated Na(+) channel (Nav). Its function is as follows. Pore-forming subunit of Nav1.5, a voltage-gated sodium (Nav) channel that directly mediates the depolarizing phase of action potentials in excitable membranes. Navs, also called VGSCs (voltage-gated sodium channels) or VDSCs (voltage-dependent sodium channels), operate by switching between closed and open conformations depending on the voltage difference across the membrane. In the open conformation they allow Na(+) ions to selectively pass through the pore, along their electrochemical gradient. The influx of Na(+) ions provokes membrane depolarization, initiating the propagation of electrical signals throughout cells and tissues. Nav1.5 is the predominant sodium channel expressed in myocardial cells and it is responsible for the initial upstroke of the action potential in cardiac myocytes, thereby initiating the heartbeat. Required for normal electrical conduction including formation of the infranodal ventricular conduction system and normal action potential configuration, as a result of its interaction with XIRP2. The chain is Sodium channel protein type 5 subunit alpha from Mus musculus (Mouse).